Here is a 1179-residue protein sequence, read N- to C-terminus: Pesticidal crystal protein Cry1Ad (1179 aa).

Belongs to the delta endotoxin family.

Functionally, promotes colloidosmotic lysis by binding to the midgut epithelial cells of many lepidopteran larvae. The protein is Pesticidal crystal protein Cry1Ad (cry1Ad) of Bacillus thuringiensis subsp. aizawai.